The primary structure comprises 581 residues: Arginine--tRNA ligase (581 aa).

The 'HIGH' region signature appears at 126-136 (PNLAKEMHVGH).

Belongs to the class-I aminoacyl-tRNA synthetase family. Monomer.

It localises to the cytoplasm. The catalysed reaction is tRNA(Arg) + L-arginine + ATP = L-arginyl-tRNA(Arg) + AMP + diphosphate. The polypeptide is Arginine--tRNA ligase (Shewanella sp. (strain MR-4)).